Consider the following 143-residue polypeptide: Putative transcriptional regulatory protein PH0763 (143 aa).

Belongs to the Tfx family.

Putative transcriptional regulator. The protein is Putative transcriptional regulatory protein PH0763 of Pyrococcus horikoshii (strain ATCC 700860 / DSM 12428 / JCM 9974 / NBRC 100139 / OT-3).